Consider the following 293-residue polypeptide: 4-hydroxybenzoate octaprenyltransferase (293 aa).

The next 8 helical transmembrane spans lie at 41 to 61 (FAAA…LGVI), 98 to 118 (TEAK…DLLL), 122 to 142 (TFLL…MKRF), 145 to 165 (LPQV…YGAV), 167 to 187 (ESLP…TVAY), 218 to 238 (IIAL…WISQ), 241 to 261 (WGYF…CWLT), and 272 to 292 (AFLN…VGIY).

The protein belongs to the UbiA prenyltransferase family. The cofactor is Mg(2+).

It localises to the cell inner membrane. It carries out the reaction all-trans-octaprenyl diphosphate + 4-hydroxybenzoate = 4-hydroxy-3-(all-trans-octaprenyl)benzoate + diphosphate. The protein operates within cofactor biosynthesis; ubiquinone biosynthesis. Functionally, catalyzes the prenylation of para-hydroxybenzoate (PHB) with an all-trans polyprenyl group. Mediates the second step in the final reaction sequence of ubiquinone-8 (UQ-8) biosynthesis, which is the condensation of the polyisoprenoid side chain with PHB, generating the first membrane-bound Q intermediate 3-octaprenyl-4-hydroxybenzoate. In Actinobacillus pleuropneumoniae serotype 5b (strain L20), this protein is 4-hydroxybenzoate octaprenyltransferase.